The chain runs to 179 residues: X-linked lymphocyte-regulated protein 5C (179 aa).

A compositionally biased stretch (basic and acidic residues) spans 1–11 (MSNKEQKDMKK). Residues 1-75 (MSNKEQKDMK…MQDFKGDDGT (75 aa)) are disordered. Positions 42–53 (GTSGMGSHSSGS) are enriched in low complexity. The segment covering 56–75 (QEAREPVQKKMQDFKGDDGT) has biased composition (basic and acidic residues). Residues 146 to 175 (ITQQQMKILQTAIEDHETKLKNAKDMCDTF) adopt a coiled-coil conformation.

It belongs to the XLR/SYCP3 family. As to expression, expressed in testis (at protein level). Also expressed in ovary. Not detected in other tissues tested.

The protein resides in the nucleus. It localises to the chromosome. The polypeptide is X-linked lymphocyte-regulated protein 5C (Mus musculus (Mouse)).